Consider the following 98-residue polypeptide: uncharacterized protein (98 aa).

It belongs to the CFAP97 family. Expressed in a number of tissues including brain, thymus, lung, heart, liver, spleen, kidney and testis.

This is an uncharacterized protein from Mus musculus (Mouse).